The primary structure comprises 101 residues: Small ribosomal subunit protein uS14 (101 aa).

This sequence belongs to the universal ribosomal protein uS14 family. In terms of assembly, part of the 30S ribosomal subunit. Contacts proteins S3 and S10.

Functionally, binds 16S rRNA, required for the assembly of 30S particles and may also be responsible for determining the conformation of the 16S rRNA at the A site. The chain is Small ribosomal subunit protein uS14 from Shewanella loihica (strain ATCC BAA-1088 / PV-4).